We begin with the raw amino-acid sequence, 83 residues long: Small ribosomal subunit protein uS17 (83 aa).

It belongs to the universal ribosomal protein uS17 family. As to quaternary structure, part of the 30S ribosomal subunit.

Its function is as follows. One of the primary rRNA binding proteins, it binds specifically to the 5'-end of 16S ribosomal RNA. In Campylobacter curvus (strain 525.92), this protein is Small ribosomal subunit protein uS17.